We begin with the raw amino-acid sequence, 488 residues long: Histone deacetylase 2 (488 aa).

Residues 9–322 are histone deacetylase; sequence KKKVCYYYDG…WTYETAVALD (314 aa). Residues Gly-28 and Lys-32 each coordinate 1D-myo-inositol 1,4,5,6-tetrakisphosphate. Lys-75 is subject to N6-acetyllysine; alternate. Lys-75 participates in a covalent cross-link: Glycyl lysine isopeptide (Lys-Gly) (interchain with G-Cter in SUMO2); alternate. The active site involves His-142. Residues Asp-175, Asp-177, His-179, Phe-188, Thr-191, Val-194, Ser-198, and Phe-199 each coordinate Ca(2+). Zn(2+)-binding residues include Asp-177 and His-179. Lys-221 carries the post-translational modification N6-acetyllysine. Tyr-223 serves as a coordination point for Ca(2+). S-nitrosocysteine is present on Cys-262. Residue Asp-265 participates in Zn(2+) binding. Arg-271 serves as a coordination point for 1D-myo-inositol 1,4,5,6-tetrakisphosphate. Cys-274 is subject to S-nitrosocysteine. Positions 389–488 are disordered; that stretch reads AVHEDSGDED…GTKSEQLSNP (100 aa). A phosphoserine mark is found at Ser-394, Ser-407, Ser-422, and Ser-424. A compositionally biased stretch (basic and acidic residues) spans 402–417; sequence PDKRISIRASDKRIAC. Residues 418–428 are compositionally biased toward acidic residues; it reads DEEFSDSEDEG. Positions 429-481 are enriched in basic and acidic residues; the sequence is EGGRRNVADHKKGAKKARIEEDKKETEDKKTDVKEEDKSKDNSGEKTDTKGTK. Glycyl lysine isopeptide (Lys-Gly) (interchain with G-Cter in SUMO2) cross-links involve residues Lys-439, Lys-452, Lys-458, Lys-462, Lys-478, and Lys-481.

Belongs to the histone deacetylase family. HD type 1 subfamily. Part of the core histone deacetylase (HDAC) complex composed of HDAC1, HDAC2, RBBP4 and RBBP7, the core complex associates with SIN3, SAP18 and SAP30 to form the SIN3 HDAC complex. Component of the nucleosome remodeling and deacetylase (NuRD) repressor complex, composed of core proteins MTA1, MTA2, MTA3, RBBP4, RBBP7, HDAC1, HDAC2, MBD2, MBD3, and peripherally associated proteins CDK2AP1, CDK2AP2, GATAD2A, GATAD2B, CHD3, CHD4 and CHD5. The exact stoichiometry of the NuRD complex is unknown, and some subunits such as MBD2 and MBD3, GATAD2A and GATAD2B, and CHD3, CHD4 and CHD5 define mutually exclusive NuRD complexes. Component of a RCOR/GFI/KDM1A/HDAC complex. Component of a BHC histone deacetylase complex that contains HDAC1, HDAC2, HMG20B, KDM1A, RCOR1 and PHF21A. The BHC complex may also contain ZMYM2, ZNF217, ZMYM3, GSE1 and GTF2I. Part of a complex containing the core histones H2A, H2B, H3 and H4, DEK and unphosphorylated DAXX. Part of a complex containing ATR and CHD4. Forms a heterologous complex at least with YY1. Interacts in the late S-phase of DNA-replication with DNMT1 in the other transcriptional repressor complex composed of DNMT1, DMAP1, PCNA, CAF1. Component of a mSin3A corepressor complex that contains SIN3A, SAP130, SUDS3, ARID4B, HDAC1 and HDAC2. Part of a complex composed of TRIM28, HDAC1, HDAC2 and EHMT2. Part of a complex containing at least CDYL, MIER1, MIER2, HDAC1 and HDAC2. Component of a histone deacetylase complex containing DNTTIP1, ZNF541, HDAC1 and HDAC2. Forms a complex comprising APPL1, RUVBL2, APPL2, CTNNB1 and HDAC1. Interacts directly with GFI1. Interacts directly with GFI1B. Interacts with APEX1; the interaction is not dependent on the acetylated status of APEX1. Interacts with ATR. Interacts with BCL6 (non-acetylated form). Interacts with BEND3. Interacts with CBFA2T3. Interacts with CDK2AP1. Interacts with CHD4. Interacts with CHD5. Interacts with CHFR. Interacts with CRY1. Interacts with DNMT1. Interacts with GATAD2A. Interacts with HCFC1. Interacts with HDAC7. Interacts with HDAC10. Interacts with INSM1. Interacts with KDM4A. Interacts with MACROH2A1 (via the non-histone region). Interacts with MBD3L2. Interacts with MTA1, with a preference for sumoylated MTA1. Interacts with NACC2. Interacts with NRIP1. Interacts with PELP1. Interacts with PIMREG. Interacts with PRDM6. Interacts with PWWP2B. Interacts with SAP30. Interacts with SAP30L. Interacts with SETDB1. Interacts with SIX3. Interacts with SMARCAD1. Interacts with SNW1. Interacts with SPHK2. Interacts with SPEN/MINT. Interacts (CK2 phosphorylated form) with SP3. Interacts with SUV39H1. Interacts with TSHZ3 (via its N-terminus). Interacts with ZMYND8. Interacts with ZNF431. Interacts with ZNF263; recruited to the SIX3 promoter along with other proteins involved in chromatin modification and transcriptional corepression where it contributes to transcriptional repression. Identified in a complex with HDAC1, KCTD19, DNTTIP1 and ZNF541. Component of the SIN3B complex, which includes SIN3B, HDAC2, PHF12 and MORF4L1; interacts directly with all subunits. Requires Zn(2+) as cofactor. Ca(2+) is required as a cofactor. Post-translationally, S-nitrosylated by GAPDH. In neurons, S-nitrosylation at Cys-262 and Cys-274 does not affect enzyme activity, but induces HDAC2 release from chromatin. This in turn increases acetylation of histones surrounding neurotrophin-dependent gene promoters and promotes their transcription. In embryonic cortical neurons, S-Nitrosylation regulates dendritic growth and branching. As to expression, widely expressed; lower levels in brain and lung.

It localises to the nucleus. The protein localises to the cytoplasm. The enzyme catalyses N(6)-acetyl-L-lysyl-[histone] + H2O = L-lysyl-[histone] + acetate. It carries out the reaction N(6)-acetyl-L-lysyl-[protein] + H2O = L-lysyl-[protein] + acetate. It catalyses the reaction N(6)-(2E)-butenoyl-L-lysyl-[protein] + H2O = (2E)-2-butenoate + L-lysyl-[protein]. The catalysed reaction is N(6)-(2-hydroxyisobutanoyl)-L-lysyl-[protein] + H2O = 2-hydroxy-2-methylpropanoate + L-lysyl-[protein]. The enzyme catalyses N(6)-[(S)-lactoyl]-L-lysyl-[protein] + H2O = (S)-lactate + L-lysyl-[protein]. Its activity is regulated as follows. Inositol tetraphosphate (1D-myo-inositol 1,4,5,6-tetrakisphosphate) may act as an intermolecular glue between HDAC2 and N-Cor repressor complex components. In terms of biological role, histone deacetylase that catalyzes the deacetylation of lysine residues on the N-terminal part of the core histones (H2A, H2B, H3 and H4). Histone deacetylation gives a tag for epigenetic repression and plays an important role in transcriptional regulation, cell cycle progression and developmental events. Histone deacetylases act via the formation of large multiprotein complexes. Forms transcriptional repressor complexes by associating with MAD, SIN3, YY1 and N-COR. Component of a RCOR/GFI/KDM1A/HDAC complex that suppresses, via histone deacetylase (HDAC) recruitment, a number of genes implicated in multilineage blood cell development. Acts as a component of the histone deacetylase NuRD complex which participates in the remodeling of chromatin. Component of the SIN3B complex that represses transcription and counteracts the histone acetyltransferase activity of EP300 through the recognition H3K27ac marks by PHF12 and the activity of the histone deacetylase HDAC2. Also deacetylates non-histone targets: deacetylates TSHZ3, thereby regulating its transcriptional repressor activity. May be involved in the transcriptional repression of circadian target genes, such as PER1, mediated by CRY1 through histone deacetylation. Involved in MTA1-mediated transcriptional corepression of TFF1 and CDKN1A. In addition to protein deacetylase activity, also acts as a protein-lysine deacylase by recognizing other acyl groups: catalyzes removal of (2E)-butenoyl (crotonyl), lactoyl (lactyl) and 2-hydroxyisobutanoyl (2-hydroxyisobutyryl) acyl groups from lysine residues, leading to protein decrotonylation, delactylation and de-2-hydroxyisobutyrylation, respectively. The chain is Histone deacetylase 2 from Homo sapiens (Human).